We begin with the raw amino-acid sequence, 348 residues long: 4-hydroxy-3-methylbut-2-en-1-yl diphosphate synthase (flavodoxin) (348 aa).

Cys-263, Cys-266, Cys-298, and Glu-305 together coordinate [4Fe-4S] cluster.

This sequence belongs to the IspG family. [4Fe-4S] cluster is required as a cofactor.

It carries out the reaction (2E)-4-hydroxy-3-methylbut-2-enyl diphosphate + oxidized [flavodoxin] + H2O + 2 H(+) = 2-C-methyl-D-erythritol 2,4-cyclic diphosphate + reduced [flavodoxin]. It participates in isoprenoid biosynthesis; isopentenyl diphosphate biosynthesis via DXP pathway; isopentenyl diphosphate from 1-deoxy-D-xylulose 5-phosphate: step 5/6. Its function is as follows. Converts 2C-methyl-D-erythritol 2,4-cyclodiphosphate (ME-2,4cPP) into 1-hydroxy-2-methyl-2-(E)-butenyl 4-diphosphate. The protein is 4-hydroxy-3-methylbut-2-en-1-yl diphosphate synthase (flavodoxin) of Dehalococcoides mccartyi (strain CBDB1).